A 265-amino-acid chain; its full sequence is MEVREIRKQLEEKLNRPEWTLSYDHKEAKLRIEDKELKKGMTIALKPLLAKVERLGDRAISEMVHYVQTGMAAFKKQTTIKGNEKRIFPVIRATSFPEENRDGHRLLFDEHTAETRVYYSLDLGDSYTLLHEQQLSREEMSAKEIREMALFNLRSLSEPLKADKVAGNTFYFLNSNDGYDASRILNESLLEKMSQKVEGQLAVAAPHQDVLIFADIVNERGYDVLAQVTMQFYAQGRIPITALPFLYENGELEPTFILAQRKPKE.

It belongs to the UPF0354 family.

This chain is UPF0354 protein BH3252, found in Halalkalibacterium halodurans (strain ATCC BAA-125 / DSM 18197 / FERM 7344 / JCM 9153 / C-125) (Bacillus halodurans).